A 367-amino-acid polypeptide reads, in one-letter code: Glutamate 5-kinase (367 aa).

Lysine 10 is an ATP binding site. The substrate site is built by serine 50, aspartate 137, and asparagine 149. Residues 169–170 (TD) and 211–217 (TGGMGTK) each bind ATP. In terms of domain architecture, PUA spans 275-353 (AGEITVDEGA…QQIDAILGYE (79 aa)).

The protein belongs to the glutamate 5-kinase family.

It localises to the cytoplasm. The enzyme catalyses L-glutamate + ATP = L-glutamyl 5-phosphate + ADP. Its pathway is amino-acid biosynthesis; L-proline biosynthesis; L-glutamate 5-semialdehyde from L-glutamate: step 1/2. Functionally, catalyzes the transfer of a phosphate group to glutamate to form L-glutamate 5-phosphate. This chain is Glutamate 5-kinase, found in Enterobacter sp. (strain 638).